The primary structure comprises 295 residues: MSATIISGNFIASKLREELKQRIRILSETWMQPGLAVILAGDNPASSVYVRNKARTCGELGIHSKVFNFSADTPQKIILRQIQDLNANPEIHGILVQLPLPSHIQMNEVIAAIAIEKDVDGFHPCNVGALATGHALFRPCTPFGVMKMLAEYGIPLQGQHAVVVGRSNIVGKPMALMLLEQGATVTICTSQTRELASHTRSADIIVMATGKANLLTSDMIRTGATVIDVGINRLADGQLCGDVEFSGVKEKAGYITPVPGGVGPMTITMLMNNTIEAAEHAKAKAQIEARCGSMQ.

NADP(+) contacts are provided by residues 165-167 (GRS), Ser190, and Ile231.

This sequence belongs to the tetrahydrofolate dehydrogenase/cyclohydrolase family. Homodimer.

It catalyses the reaction (6R)-5,10-methylene-5,6,7,8-tetrahydrofolate + NADP(+) = (6R)-5,10-methenyltetrahydrofolate + NADPH. It carries out the reaction (6R)-5,10-methenyltetrahydrofolate + H2O = (6R)-10-formyltetrahydrofolate + H(+). Its pathway is one-carbon metabolism; tetrahydrofolate interconversion. Catalyzes the oxidation of 5,10-methylenetetrahydrofolate to 5,10-methenyltetrahydrofolate and then the hydrolysis of 5,10-methenyltetrahydrofolate to 10-formyltetrahydrofolate. The protein is Bifunctional protein FolD of Nitrosomonas eutropha (strain DSM 101675 / C91 / Nm57).